Consider the following 275-residue polypeptide: 3-methyl-2-oxobutanoate hydroxymethyltransferase (275 aa).

Mg(2+) is bound by residues Asp-49 and Asp-88. 3-methyl-2-oxobutanoate-binding positions include 49-50 (DS), Asp-88, and Lys-118. Residue Glu-120 participates in Mg(2+) binding. The active-site Proton acceptor is the Glu-187.

It belongs to the PanB family. Homodecamer; pentamer of dimers. Requires Mg(2+) as cofactor.

It localises to the cytoplasm. The enzyme catalyses 3-methyl-2-oxobutanoate + (6R)-5,10-methylene-5,6,7,8-tetrahydrofolate + H2O = 2-dehydropantoate + (6S)-5,6,7,8-tetrahydrofolate. Its pathway is cofactor biosynthesis; (R)-pantothenate biosynthesis; (R)-pantoate from 3-methyl-2-oxobutanoate: step 1/2. In terms of biological role, catalyzes the reversible reaction in which hydroxymethyl group from 5,10-methylenetetrahydrofolate is transferred onto alpha-ketoisovalerate to form ketopantoate. The chain is 3-methyl-2-oxobutanoate hydroxymethyltransferase from Hyphomonas neptunium (strain ATCC 15444).